A 638-amino-acid polypeptide reads, in one-letter code: ATP-dependent zinc metalloprotease FtsH (638 aa).

The Cytoplasmic segment spans residues 1–7; sequence MRSTYKT. The chain crosses the membrane as a helical span at residues 8–28; it reads IGLWVILIVLFVAFYNFFSQG. Residues 29-102 lie on the Periplasmic side of the membrane; it reads NDQVQEPSFT…KYEREEQNSL (74 aa). A helical transmembrane segment spans residues 103 to 123; that stretch reads WLTILGQWMPVVFLFLFFIFF. Over 124 to 638 the chain is Cytoplasmic; that stretch reads MRQLQGGSGK…GLPAMEPKKA (515 aa). Position 195–202 (195–202) interacts with ATP; sequence GSPGTGKT. Position 417 (His-417) interacts with Zn(2+). Glu-418 is an active-site residue. Zn(2+) contacts are provided by His-421 and Asp-493. The interval 596-638 is disordered; the sequence is GGQLTRERPPPRVNAPPKATEKKDKRKILDALEGLPAMEPKKA. Residues 614 to 625 are compositionally biased toward basic and acidic residues; the sequence is ATEKKDKRKILD.

This sequence in the central section; belongs to the AAA ATPase family. It in the C-terminal section; belongs to the peptidase M41 family. As to quaternary structure, homohexamer. The cofactor is Zn(2+).

It localises to the cell inner membrane. In terms of biological role, acts as a processive, ATP-dependent zinc metallopeptidase for both cytoplasmic and membrane proteins. Plays a role in the quality control of integral membrane proteins. The sequence is that of ATP-dependent zinc metalloprotease FtsH from Myxococcus xanthus (strain DK1622).